Consider the following 214-residue polypeptide: Orotate phosphoribosyltransferase (214 aa).

Lys-26 contacts 5-phospho-alpha-D-ribose 1-diphosphate. 34 to 35 (FF) provides a ligand contact to orotate. 5-phospho-alpha-D-ribose 1-diphosphate-binding positions include 72–73 (YK), Arg-98, Lys-99, Lys-102, His-104, and 123–131 (DDVISAGTS). Orotate-binding residues include Ser-127 and Arg-155.

The protein belongs to the purine/pyrimidine phosphoribosyltransferase family. PyrE subfamily. As to quaternary structure, homodimer. It depends on Mg(2+) as a cofactor.

It carries out the reaction orotidine 5'-phosphate + diphosphate = orotate + 5-phospho-alpha-D-ribose 1-diphosphate. Its pathway is pyrimidine metabolism; UMP biosynthesis via de novo pathway; UMP from orotate: step 1/2. Catalyzes the transfer of a ribosyl phosphate group from 5-phosphoribose 1-diphosphate to orotate, leading to the formation of orotidine monophosphate (OMP). In Chromobacterium violaceum (strain ATCC 12472 / DSM 30191 / JCM 1249 / CCUG 213 / NBRC 12614 / NCIMB 9131 / NCTC 9757 / MK), this protein is Orotate phosphoribosyltransferase.